A 311-amino-acid polypeptide reads, in one-letter code: tRNA-cytidine(32) 2-sulfurtransferase (311 aa).

Residues 47–52 (SGGKDS) carry the PP-loop motif motif. Residues Cys-122, Cys-125, and Cys-213 each contribute to the [4Fe-4S] cluster site.

It belongs to the TtcA family. As to quaternary structure, homodimer. Requires Mg(2+) as cofactor. The cofactor is [4Fe-4S] cluster.

It is found in the cytoplasm. It carries out the reaction cytidine(32) in tRNA + S-sulfanyl-L-cysteinyl-[cysteine desulfurase] + AH2 + ATP = 2-thiocytidine(32) in tRNA + L-cysteinyl-[cysteine desulfurase] + A + AMP + diphosphate + H(+). The protein operates within tRNA modification. Its function is as follows. Catalyzes the ATP-dependent 2-thiolation of cytidine in position 32 of tRNA, to form 2-thiocytidine (s(2)C32). The sulfur atoms are provided by the cysteine/cysteine desulfurase (IscS) system. The protein is tRNA-cytidine(32) 2-sulfurtransferase of Escherichia fergusonii (strain ATCC 35469 / DSM 13698 / CCUG 18766 / IAM 14443 / JCM 21226 / LMG 7866 / NBRC 102419 / NCTC 12128 / CDC 0568-73).